Here is a 364-residue protein sequence, read N- to C-terminus: Methylthioribose-1-phosphate isomerase (364 aa).

Residues 53–55, arginine 90, and glutamine 203 contribute to the substrate site; that span reads RGA. Aspartate 244 acts as the Proton donor in catalysis. 254–255 serves as a coordination point for substrate; it reads NK.

Belongs to the eIF-2B alpha/beta/delta subunits family. MtnA subfamily.

It catalyses the reaction 5-(methylsulfanyl)-alpha-D-ribose 1-phosphate = 5-(methylsulfanyl)-D-ribulose 1-phosphate. It functions in the pathway amino-acid biosynthesis; L-methionine biosynthesis via salvage pathway; L-methionine from S-methyl-5-thio-alpha-D-ribose 1-phosphate: step 1/6. Its function is as follows. Catalyzes the interconversion of methylthioribose-1-phosphate (MTR-1-P) into methylthioribulose-1-phosphate (MTRu-1-P). This Brucella anthropi (strain ATCC 49188 / DSM 6882 / CCUG 24695 / JCM 21032 / LMG 3331 / NBRC 15819 / NCTC 12168 / Alc 37) (Ochrobactrum anthropi) protein is Methylthioribose-1-phosphate isomerase.